Reading from the N-terminus, the 205-residue chain is Transmembrane emp24 domain-containing protein A (205 aa).

A signal peptide spans 1–24 (MMNNKLLLLVIALLCIASNSIVES). Topologically, residues 25–172 (FSFKVSAKVE…RNTAESTNSR (148 aa)) are lumenal. The GOLD domain occupies 34–116 (EECIYEEIGV…DKTVSFILSV (83 aa)). A helical transmembrane segment spans residues 173–193 (VLWWSVFEAFVLIALSIWQIY). Residues 194–205 (YLRRFFEVKRAV) are Cytoplasmic-facing.

This sequence belongs to the EMP24/GP25L family.

The protein localises to the cytoplasmic vesicle membrane. Functionally, could have a role in the budding of coatomer-coated and other species of coated vesicles. The protein is Transmembrane emp24 domain-containing protein A (empA) of Dictyostelium discoideum (Social amoeba).